Consider the following 172-residue polypeptide: MPLLDSFTVDHTRMEAPAVRVAKKMQTPKGDTITVFDLRFTAPNKDILSEKGIHTLEHLYAGFMRNHLNGTDVEIIDISPMGCRTGFYMSLIGTPVEQTVANAWIASMEDVLNVEDQNKIPELNEYQCGTYTMHSLEEAKAIATAILAAGIQVNKNDDLALPESMLKELSVD.

Residues His54, His58, and Cys128 each contribute to the Fe cation site.

This sequence belongs to the LuxS family. In terms of assembly, homodimer. Fe cation is required as a cofactor.

It catalyses the reaction S-(5-deoxy-D-ribos-5-yl)-L-homocysteine = (S)-4,5-dihydroxypentane-2,3-dione + L-homocysteine. Its function is as follows. Involved in the synthesis of autoinducer 2 (AI-2) which is secreted by bacteria and is used to communicate both the cell density and the metabolic potential of the environment. The regulation of gene expression in response to changes in cell density is called quorum sensing. Catalyzes the transformation of S-ribosylhomocysteine (RHC) to homocysteine (HC) and 4,5-dihydroxy-2,3-pentadione (DPD). The protein is S-ribosylhomocysteine lyase of Aliivibrio salmonicida (strain LFI1238) (Vibrio salmonicida (strain LFI1238)).